A 167-amino-acid polypeptide reads, in one-letter code: NAD(P)H-quinone oxidoreductase subunit I, chloroplastic (167 aa).

4Fe-4S ferredoxin-type domains lie at 55-84 and 95-124; these read GRIHFEFDKCIACEVCVRVCPIDLPVVDWK and LNYSIDFGICIFCGNCVEYCPTNCLSMTEE. [4Fe-4S] cluster is bound by residues Cys64, Cys67, Cys70, Cys74, Cys104, Cys107, Cys110, and Cys114.

It belongs to the complex I 23 kDa subunit family. NDH is composed of at least 16 different subunits, 5 of which are encoded in the nucleus. [4Fe-4S] cluster serves as cofactor.

It is found in the plastid. The protein resides in the chloroplast thylakoid membrane. The enzyme catalyses a plastoquinone + NADH + (n+1) H(+)(in) = a plastoquinol + NAD(+) + n H(+)(out). It carries out the reaction a plastoquinone + NADPH + (n+1) H(+)(in) = a plastoquinol + NADP(+) + n H(+)(out). In terms of biological role, NDH shuttles electrons from NAD(P)H:plastoquinone, via FMN and iron-sulfur (Fe-S) centers, to quinones in the photosynthetic chain and possibly in a chloroplast respiratory chain. The immediate electron acceptor for the enzyme in this species is believed to be plastoquinone. Couples the redox reaction to proton translocation, and thus conserves the redox energy in a proton gradient. The chain is NAD(P)H-quinone oxidoreductase subunit I, chloroplastic from Draba nemorosa (Woodland whitlowgrass).